A 1052-amino-acid polypeptide reads, in one-letter code: F-box/WD repeat-containing protein 10 (1052 aa).

A WD 1 repeat occupies 169-206 (GLNQDITDVCFSPEKDHSSKSATSQVYWTAKTQHTSLP). Residues 276–323 (DFIRYLPIHLSKYILRMLDRHTLNKCASVSQHWAAMAQQVKMDLSAHG) form the F-box domain. WD repeat units lie at residues 409 to 447 (SDTW…AIPV), 451 to 490 (GHAG…CTRI), 493 to 532 (GHQG…KTFR), 534 to 569 (KDPI…LVKT), 572 to 609 (GHEG…ERCL), and 611 to 652 (AFKH…KVLK). Residues 690–719 (YAVEKTKQKKNKEKEEEKEENSLMEILSKC) adopt a coiled-coil conformation. Residues 766-805 (LQSQGKSKSPRRDADDVEKAQKQGQLETPGKLPSHPKKKS) form a disordered region. The span at 775–786 (PRRDADDVEKAQ) shows a compositional bias: basic and acidic residues. Positions 986–1010 (VLLTVKEEKEHQEAKMKEYQAREST) form a coiled coil.

In terms of biological role, probable substrate-recognition component of a SCF (SKP1-CUL1-F-box protein)-type E3 ubiquitin ligase complex which mediates the ubiquitination and subsequent proteasomal degradation of target proteins. Overexpression is leading to degradation of CBX5 and CBX1. The chain is F-box/WD repeat-containing protein 10 (FBXW10) from Homo sapiens (Human).